We begin with the raw amino-acid sequence, 493 residues long: Proline--tRNA ligase (493 aa).

This sequence belongs to the class-II aminoacyl-tRNA synthetase family. ProS type 3 subfamily. Homodimer.

The protein localises to the cytoplasm. The catalysed reaction is tRNA(Pro) + L-proline + ATP = L-prolyl-tRNA(Pro) + AMP + diphosphate. In terms of biological role, catalyzes the attachment of proline to tRNA(Pro) in a two-step reaction: proline is first activated by ATP to form Pro-AMP and then transferred to the acceptor end of tRNA(Pro). This is Proline--tRNA ligase from Porphyromonas gingivalis (strain ATCC BAA-308 / W83).